The following is a 620-amino-acid chain: Chaperone protein HscA homolog (620 aa).

Belongs to the heat shock protein 70 family.

In terms of biological role, chaperone involved in the maturation of iron-sulfur cluster-containing proteins. Has a low intrinsic ATPase activity which is markedly stimulated by HscB. The polypeptide is Chaperone protein HscA homolog (Acinetobacter baylyi (strain ATCC 33305 / BD413 / ADP1)).